Consider the following 206-residue polypeptide: LexA repressor (206 aa).

The H-T-H motif DNA-binding region spans 28-48 (RAEIATRLGFKSANAAEEHLK). Catalysis depends on for autocatalytic cleavage activity residues S123 and K160.

Belongs to the peptidase S24 family. Homodimer.

The enzyme catalyses Hydrolysis of Ala-|-Gly bond in repressor LexA.. In terms of biological role, represses a number of genes involved in the response to DNA damage (SOS response), including recA and lexA. In the presence of single-stranded DNA, RecA interacts with LexA causing an autocatalytic cleavage which disrupts the DNA-binding part of LexA, leading to derepression of the SOS regulon and eventually DNA repair. This chain is LexA repressor, found in Shewanella putrefaciens (strain CN-32 / ATCC BAA-453).